We begin with the raw amino-acid sequence, 160 residues long: Protein-export protein SecB (160 aa).

The protein belongs to the SecB family. Homotetramer, a dimer of dimers. One homotetramer interacts with 1 SecA dimer.

The protein resides in the cytoplasm. One of the proteins required for the normal export of preproteins out of the cell cytoplasm. It is a molecular chaperone that binds to a subset of precursor proteins, maintaining them in a translocation-competent state. It also specifically binds to its receptor SecA. This is Protein-export protein SecB from Orientia tsutsugamushi (strain Boryong) (Rickettsia tsutsugamushi).